A 341-amino-acid chain; its full sequence is uncharacterized protein (341 aa).

58-82 contributes to the NADP(+) binding site; sequence ITGGSSGIGAAAAKKIAEAGGTVVL. Residue Ser194 coordinates substrate. Tyr207 acts as the Proton acceptor in catalysis. A disordered region spans residues 309–329; that stretch reads DSSAAKGSESQTDTSELDKRS.

Belongs to the short-chain dehydrogenases/reductases (SDR) family.

This is an uncharacterized protein from Mycobacterium bovis (strain ATCC BAA-935 / AF2122/97).